A 98-amino-acid chain; its full sequence is Ferredoxin-like protein (98 aa).

It to ferredoxins from P.putida and C.tartarivorum, ferredoxin I from A.vinelandii, ferredoxin II from D.desulfuricans.

Its function is as follows. Could be a 3Fe-4S cluster-containing protein. The polypeptide is Ferredoxin-like protein (fixX) (Rhizobium leguminosarum bv. trifolii).